The primary structure comprises 231 residues: 7-cyano-7-deazaguanine synthase (231 aa).

8-18 (FSGGQDSTTCL) is a binding site for ATP. Residues C188, C197, C200, and C203 each coordinate Zn(2+).

This sequence belongs to the QueC family. It depends on Zn(2+) as a cofactor.

It catalyses the reaction 7-carboxy-7-deazaguanine + NH4(+) + ATP = 7-cyano-7-deazaguanine + ADP + phosphate + H2O + H(+). It participates in purine metabolism; 7-cyano-7-deazaguanine biosynthesis. In terms of biological role, catalyzes the ATP-dependent conversion of 7-carboxy-7-deazaguanine (CDG) to 7-cyano-7-deazaguanine (preQ(0)). The sequence is that of 7-cyano-7-deazaguanine synthase from Erwinia tasmaniensis (strain DSM 17950 / CFBP 7177 / CIP 109463 / NCPPB 4357 / Et1/99).